We begin with the raw amino-acid sequence, 964 residues long: Isoleucine--tRNA ligase (964 aa).

Residues P66 to H76 carry the 'HIGH' region motif. Residue E596 participates in L-isoleucyl-5'-AMP binding. Residues K637–S641 carry the 'KMSKS' region motif. K640 is an ATP binding site. Zn(2+)-binding residues include C927, C930, C947, and C950.

The protein belongs to the class-I aminoacyl-tRNA synthetase family. IleS type 1 subfamily. Monomer. Requires Zn(2+) as cofactor.

The protein localises to the cytoplasm. It carries out the reaction tRNA(Ile) + L-isoleucine + ATP = L-isoleucyl-tRNA(Ile) + AMP + diphosphate. Catalyzes the attachment of isoleucine to tRNA(Ile). As IleRS can inadvertently accommodate and process structurally similar amino acids such as valine, to avoid such errors it has two additional distinct tRNA(Ile)-dependent editing activities. One activity is designated as 'pretransfer' editing and involves the hydrolysis of activated Val-AMP. The other activity is designated 'posttransfer' editing and involves deacylation of mischarged Val-tRNA(Ile). The chain is Isoleucine--tRNA ligase from Cupriavidus necator (strain ATCC 17699 / DSM 428 / KCTC 22496 / NCIMB 10442 / H16 / Stanier 337) (Ralstonia eutropha).